An 807-amino-acid chain; its full sequence is Glycerol-3-phosphate acyltransferase (807 aa).

An HXXXXD motif motif is present at residues 305-310; the sequence is CHRSHM.

Belongs to the GPAT/DAPAT family.

It is found in the cell inner membrane. It catalyses the reaction sn-glycerol 3-phosphate + an acyl-CoA = a 1-acyl-sn-glycero-3-phosphate + CoA. The protein operates within phospholipid metabolism; CDP-diacylglycerol biosynthesis; CDP-diacylglycerol from sn-glycerol 3-phosphate: step 1/3. The chain is Glycerol-3-phosphate acyltransferase from Shigella boydii serotype 18 (strain CDC 3083-94 / BS512).